A 216-amino-acid chain; its full sequence is Protein-L-isoaspartate O-methyltransferase (216 aa).

The active site involves Ser62.

The protein belongs to the methyltransferase superfamily. L-isoaspartyl/D-aspartyl protein methyltransferase family.

The protein localises to the cytoplasm. It catalyses the reaction [protein]-L-isoaspartate + S-adenosyl-L-methionine = [protein]-L-isoaspartate alpha-methyl ester + S-adenosyl-L-homocysteine. Catalyzes the methyl esterification of L-isoaspartyl residues in peptides and proteins that result from spontaneous decomposition of normal L-aspartyl and L-asparaginyl residues. It plays a role in the repair and/or degradation of damaged proteins. This Methanospirillum hungatei JF-1 (strain ATCC 27890 / DSM 864 / NBRC 100397 / JF-1) protein is Protein-L-isoaspartate O-methyltransferase.